The following is a 157-amino-acid chain: UPF0262 protein amb3341 (157 aa).

This sequence belongs to the UPF0262 family.

In Paramagnetospirillum magneticum (strain ATCC 700264 / AMB-1) (Magnetospirillum magneticum), this protein is UPF0262 protein amb3341.